A 342-amino-acid chain; its full sequence is Global transcription regulator FGP1 (342 aa).

A disordered region spans residues 91–113; that stretch reads FSPGEKKRASKKPKKQAGVAKAY.

It belongs to the MIT1/WOR1 family.

Its subcellular location is the nucleus. Functionally, global transcriptional regulator of pathogenicity. Regulates many genes during growth in putrescine medium and during infection. Involved in the developmental processes of conidium formation and sexual reproduction and modulates a morphological change that accompanies mycotoxin production. This chain is Global transcription regulator FGP1, found in Gibberella zeae (strain ATCC MYA-4620 / CBS 123657 / FGSC 9075 / NRRL 31084 / PH-1) (Wheat head blight fungus).